The chain runs to 170 residues: Cyclic pyranopterin monophosphate synthase (170 aa).

Substrate-binding positions include 75-77 (MCH) and 115-116 (ME). Asp130 is an active-site residue.

The protein belongs to the MoaC family. In terms of assembly, homohexamer; trimer of dimers.

The enzyme catalyses (8S)-3',8-cyclo-7,8-dihydroguanosine 5'-triphosphate = cyclic pyranopterin phosphate + diphosphate. It functions in the pathway cofactor biosynthesis; molybdopterin biosynthesis. Its function is as follows. Catalyzes the conversion of (8S)-3',8-cyclo-7,8-dihydroguanosine 5'-triphosphate to cyclic pyranopterin monophosphate (cPMP). This chain is Cyclic pyranopterin monophosphate synthase, found in Bacillus velezensis (strain DSM 23117 / BGSC 10A6 / LMG 26770 / FZB42) (Bacillus amyloliquefaciens subsp. plantarum).